Reading from the N-terminus, the 133-residue chain is Major seminal plasma glycoprotein PSP-I (133 aa).

Positions 1–24 (MKLGSAIPWALLFSTATLISTGWG) are cleaved as a signal peptide. A disulfide bridge connects residues Cys-30 and Cys-51. A CUB domain is found at 30–130 (CGGRLTDDYG…SPYEIIFLRD (101 aa)). An N-linked (GlcNAc...) (complex) asparagine glycan is attached at Asn-71. A disulfide bridge links Cys-74 with Cys-95.

As to quaternary structure, monomer or heterodimer with PSP-II (depending on the type of glycosylation of PSP-I). In terms of tissue distribution, seminal plasma or sperm.

Its subcellular location is the secreted. Functionally, not yet identified, major porcine seminal plasma protein. Can bind soybean trypsin inhibitor after deglycosylation. The sequence is that of Major seminal plasma glycoprotein PSP-I from Sus scrofa (Pig).